The following is a 337-amino-acid chain: Palmitoyltransferase ZDHHC15 (337 aa).

Residues Met-1–Leu-20 lie on the Cytoplasmic side of the membrane. The helical transmembrane segment at Ser-21 to Phe-41 threads the bilayer. At Glu-42 to Ile-56 the chain is on the lumenal side. The chain crosses the membrane as a helical span at residues Tyr-57–Phe-77. The Cytoplasmic segment spans residues Thr-78–Lys-172. The DHHC domain maps to Arg-129–Ala-179. Positions 131, 134, 144, 145, 148, 151, and 158 each coordinate Zn(2+). Cys-159 acts as the S-palmitoyl cysteine intermediate in catalysis. A Zn(2+)-binding site is contributed by Cys-165. Residues Phe-173–Phe-193 traverse the membrane as a helical segment. Topologically, residues Ser-194–Lys-210 are lumenal. Residues Phe-211–His-234 form a helical membrane-spanning segment. Over Cys-235–Thr-337 the chain is Cytoplasmic. A disordered region spans residues His-293 to Thr-337. Residues Glu-312–Ser-321 are compositionally biased toward acidic residues. Residues Gly-327–Thr-337 are compositionally biased toward polar residues.

This sequence belongs to the DHHC palmitoyltransferase family. In terms of processing, autopalmitoylated (in vitro). In terms of tissue distribution, expressed mainly in brain.

It is found in the golgi apparatus membrane. Its subcellular location is the postsynaptic density. It carries out the reaction L-cysteinyl-[protein] + hexadecanoyl-CoA = S-hexadecanoyl-L-cysteinyl-[protein] + CoA. The catalysed reaction is L-cysteinyl-[protein] + tetradecanoyl-CoA = S-tetradecanoyl-L-cysteinyl-[protein] + CoA. The enzyme catalyses L-cysteinyl-[protein] + octadecanoyl-CoA = S-octadecanoyl-L-cysteinyl-[protein] + CoA. With respect to regulation, inhibited by 2-bromopalmitate. In terms of biological role, palmitoyltransferase that catalyzes the addition of palmitate onto various protein substrates. Has no stringent fatty acid selectivity and in addition to palmitate can also transfer onto target proteins myristate from tetradecanoyl-CoA and stearate from octadecanoyl-CoA. Palmitoylates IGF2R and SORT1, promoting their partitioning to an endosomal membrane subdomain where they can interact with the retromer cargo-selective complex. Thereby, regulates retrograde transport from endosomes to the Golgi apparatus of these lysosomal sorting receptors and plays a role in trafficking of lysosomal proteins. In the nervous system, catalyzes the palmitoylation of DLG4/PSD95 and regulates its synaptic clustering and function in synaptogenesis. Could be involved in the differentiation of dopaminergic neurons and the development of the diencephalon. Could also catalyze the palmitoylation of GAP43. Could also palmitoylate DNAJC5 and regulate its localization to the Golgi membrane. Could also palmitoylate FYN as shown in vitro. May palmitoylate CALHM3 subunit of gustatory voltage-gated ion channels and modulate channel gating and kinetics. The polypeptide is Palmitoyltransferase ZDHHC15 (Mus musculus (Mouse)).